We begin with the raw amino-acid sequence, 240 residues long: Protein shisa-5 (240 aa).

An N-terminal signal peptide occupies residues 1 to 28 (MTAPVPAPRILLPLLLLLLLTPPPGARG). Over 29–105 (EVCMASRGLS…RPGYNDPMSG (77 aa)) the chain is Extracellular. Residues 106–126 (FGATLAVGLTIFVLSVVTIII) traverse the membrane as a helical segment. At 127 to 240 (CFTCSCCCLY…AYMDAPKAAL (114 aa)) the chain is on the cytoplasmic side.

Belongs to the shisa family. Interacts with PDCD6; PDCD6 can stabilize SHISA5.

The protein resides in the endoplasmic reticulum membrane. It localises to the nucleus membrane. Its function is as follows. Can induce apoptosis in a caspase-dependent manner and plays a role in p53/TP53-dependent apoptosis. The protein is Protein shisa-5 (SHISA5) of Homo sapiens (Human).